The primary structure comprises 339 residues: MDATNNGESADQVGIRVGNPEQPNDHTDALGSVGSGGAGSSGLVAGSSHPYGSGAIGQLANGYSSPSSSYRKNVAKMVTDRHAAEYNMRHKNRGMALIFNHEHFEVPTLKSRAGTNVDCENLTRVLKQLDFEVTVYKDCRYKDILRTIEYAASQNHSDSDCILVAILSHGEMGYIYAKDTQYKLDNIWSFFTANHCPSLAGKPKLFFIQACQGDRLDGGVTMQRSQTETDGDSSMSYKIPVHADFLIAYSTVPGFYSWRNTTRGSWFMQSLCAELAANGKRLDILTLLTFVCQRVAVDFESCTPDTPEMHQQKQIPCITTMLTRILRFSDKQLAPAGRV.

Residues 1-28 (MDATNNGESADQVGIRVGNPEQPNDHTD) constitute a propeptide that is removed on maturation. The interval 1–45 (MDATNNGESADQVGIRVGNPEQPNDHTDALGSVGSGGAGSSGLVA) is disordered. Catalysis depends on residues His-169 and Cys-211. A propeptide spanning residues 218–230 (GGVTMQRSQTETD) is cleaved from the precursor.

Belongs to the peptidase C14A family. Heterotetramer that consists of two anti-parallel arranged heterodimers, each one formed by a 21 kDa (p21) and a 12 kDa (p12) subunit. Inactive pro-form can homodimerize. Dronc and Drice can form a stable complex. Interacts with Diap2 (via BIR3 domain) to form a stable complex. May interact with some isoforms of Dark.

With respect to regulation, zymogen activated by proteolytic cleavage; cleaved by the initiator caspase Dronc upon apoptosis induction. Involved in the activation cascade of caspases responsible for apoptosis execution. Acts downstream of rpr. Cleaves baculovirus p35 and lamin DmO in vitro. This chain is Caspase drICE (Drice), found in Drosophila melanogaster (Fruit fly).